The sequence spans 198 residues: ATP-dependent Clp protease proteolytic subunit (198 aa).

Residue serine 98 is the Nucleophile of the active site. Histidine 123 is a catalytic residue.

The protein belongs to the peptidase S14 family. In terms of assembly, fourteen ClpP subunits assemble into 2 heptameric rings which stack back to back to give a disk-like structure with a central cavity, resembling the structure of eukaryotic proteasomes.

It is found in the cytoplasm. The catalysed reaction is Hydrolysis of proteins to small peptides in the presence of ATP and magnesium. alpha-casein is the usual test substrate. In the absence of ATP, only oligopeptides shorter than five residues are hydrolyzed (such as succinyl-Leu-Tyr-|-NHMec, and Leu-Tyr-Leu-|-Tyr-Trp, in which cleavage of the -Tyr-|-Leu- and -Tyr-|-Trp bonds also occurs).. Cleaves peptides in various proteins in a process that requires ATP hydrolysis. Has a chymotrypsin-like activity. Plays a major role in the degradation of misfolded proteins. The sequence is that of ATP-dependent Clp protease proteolytic subunit from Ehrlichia ruminantium (strain Gardel).